The sequence spans 621 residues: Chaperone protein HtpG (621 aa).

Residues 1 to 341 (MSNQEYTFQT…SEDLPLNVSR (341 aa)) are a; substrate-binding. The b stretch occupies residues 342–547 (EILQQNKILA…GDEQNAMMAN (206 aa)). Residues 548–621 (LMRQMGQNMP…RLNSVLLKAL (74 aa)) are c.

Belongs to the heat shock protein 90 family. As to quaternary structure, homodimer.

The protein localises to the cytoplasm. Molecular chaperone. Has ATPase activity. The sequence is that of Chaperone protein HtpG from Helicobacter acinonychis (strain Sheeba).